Reading from the N-terminus, the 101-residue chain is Protein SPIRAL1-like 3 (101 aa).

Residues 1 to 22 (MGRGVSSGGGQSSLGYLFGGGE) show a composition bias toward gly residues. Disordered regions lie at residues 1–54 (MGRG…GIQS) and 73–101 (TDRP…KDGK).

This sequence belongs to the SPIRAL1 family.

Its function is as follows. Acts in maintaining the cortical microtubules organization essential for anisotropic cell growth. This chain is Protein SPIRAL1-like 3, found in Oryza sativa subsp. japonica (Rice).